A 639-amino-acid chain; its full sequence is Chaperone protein DnaK (639 aa).

The residue at position 196 (Thr-196) is a Phosphothreonine; by autocatalysis. The disordered stretch occupies residues 592-639 (ASSLYQTPDAGAPGASGPSAGGEPETGKKGGDGEVQNAEYEVIDGNDK). The span at 601-613 (AGAPGASGPSAGG) shows a compositional bias: low complexity.

This sequence belongs to the heat shock protein 70 family.

Its function is as follows. Acts as a chaperone. The sequence is that of Chaperone protein DnaK from Chlorobium limicola (strain DSM 245 / NBRC 103803 / 6330).